We begin with the raw amino-acid sequence, 224 residues long: COMM domain-containing protein 5 (224 aa).

Ser-2 bears the N-acetylserine mark. In terms of domain architecture, COMM spans 151–215; sequence HVADFRWRVD…LVLKEMADLE (65 aa).

Belongs to the COMM domain-containing protein 5 family. Component of the commander complex consisting of the CCC subcomplex and the retriever subcomplex. Component of the CCC (COMMD/CCDC22/CCDC93) subcomplex consisting of COMMD1, COMMD2, COMMD3, COMMD4, COMMD5, COMMD6, COMMD7, COMMD8, COMMD9, COMMD10, CCDC22 and CCDC93; within the complex forms a heterodimer with COMMD10. Interacts (via COMM domain) with COMMD1 (via COMM domain). Interacts with RELA, RELB, NFKB1/p105. Interacts with CCDC22, CCDC93, SCNN1B, CUL2, CUL3, CUL4A, CUL4B, CUL7. Highly expressed in heart, stomach, jejunum, kidney, liver, and adrenal gland. Expression was generally higher in adult organs than in fetal tissues, particularly in heart, kidney, and liver.

Its subcellular location is the cytoplasm. The protein resides in the nucleus. Functionally, scaffold protein in the commander complex that is essential for endosomal recycling of transmembrane cargos; the commander complex is composed of the CCC subcomplex and the retriever subcomplex. May modulate activity of cullin-RING E3 ubiquitin ligase (CRL) complexes. Negatively regulates cell proliferation. Negatively regulates cell cycle G2/M phase transition probably by transactivating p21/CDKN1A through the p53/TP53-independent signaling pathway. Involved in kidney proximal tubule morphogenesis. Down-regulates activation of NF-kappa-B. In Homo sapiens (Human), this protein is COMM domain-containing protein 5 (COMMD5).